A 343-amino-acid polypeptide reads, in one-letter code: D-erythrose-4-phosphate dehydrogenase (343 aa).

12 to 13 lines the NAD(+) pocket; sequence RI. Substrate-binding positions include 154–156, Arg-200, 213–214, and Arg-236; these read SCT and TK. The Nucleophile role is filled by Cys-155. Asn-318 contacts NAD(+).

The protein belongs to the glyceraldehyde-3-phosphate dehydrogenase family. Epd subfamily. As to quaternary structure, homotetramer.

The protein localises to the cytoplasm. It catalyses the reaction D-erythrose 4-phosphate + NAD(+) + H2O = 4-phospho-D-erythronate + NADH + 2 H(+). It participates in cofactor biosynthesis; pyridoxine 5'-phosphate biosynthesis; pyridoxine 5'-phosphate from D-erythrose 4-phosphate: step 1/5. In terms of biological role, catalyzes the NAD-dependent conversion of D-erythrose 4-phosphate to 4-phosphoerythronate. The chain is D-erythrose-4-phosphate dehydrogenase from Pseudoalteromonas translucida (strain TAC 125).